Consider the following 382-residue polypeptide: Queuine tRNA-ribosyltransferase (382 aa).

Aspartate 89 serves as the catalytic Proton acceptor. Substrate is bound by residues 89–93 (DSGGF), aspartate 143, glutamine 187, and glycine 214. An RNA binding region spans residues 245–251 (GVGKPED). The active-site Nucleophile is aspartate 264. The interval 269–273 (TRNAR) is RNA binding; important for wobble base 34 recognition. Residues cysteine 302, cysteine 304, cysteine 307, and histidine 333 each coordinate Zn(2+).

The protein belongs to the queuine tRNA-ribosyltransferase family. In terms of assembly, homodimer. Within each dimer, one monomer is responsible for RNA recognition and catalysis, while the other monomer binds to the replacement base PreQ1. It depends on Zn(2+) as a cofactor.

It catalyses the reaction 7-aminomethyl-7-carbaguanine + guanosine(34) in tRNA = 7-aminomethyl-7-carbaguanosine(34) in tRNA + guanine. Its pathway is tRNA modification; tRNA-queuosine biosynthesis. In terms of biological role, catalyzes the base-exchange of a guanine (G) residue with the queuine precursor 7-aminomethyl-7-deazaguanine (PreQ1) at position 34 (anticodon wobble position) in tRNAs with GU(N) anticodons (tRNA-Asp, -Asn, -His and -Tyr). Catalysis occurs through a double-displacement mechanism. The nucleophile active site attacks the C1' of nucleotide 34 to detach the guanine base from the RNA, forming a covalent enzyme-RNA intermediate. The proton acceptor active site deprotonates the incoming PreQ1, allowing a nucleophilic attack on the C1' of the ribose to form the product. After dissociation, two additional enzymatic reactions on the tRNA convert PreQ1 to queuine (Q), resulting in the hypermodified nucleoside queuosine (7-(((4,5-cis-dihydroxy-2-cyclopenten-1-yl)amino)methyl)-7-deazaguanosine). This is Queuine tRNA-ribosyltransferase from Sodalis glossinidius (strain morsitans).